A 412-amino-acid chain; its full sequence is NF-kappa-B essential modulator (412 aa).

The interval 1-48 (MSRHLWKNQLSEMVQPSGGPAEDQDMLGEESSLGKPAMLHLPSEQGTP) is disordered. The interval 1–197 (MSRHLWKNQL…REVLQQQHSV (197 aa)) is required for interaction with and ubiquitination by MARCHF2. Phosphoserine; by IKKB occurs at positions 31 and 43. Residues 44 to 111 (EQGTPETLQR…KLVERLSLEK (68 aa)) are interaction with CHUK/IKBKB. A coiled-coil region spans residues 49–343 (ETLQRCLEEN…NKLKVGCHES (295 aa)). Ser68 is modified (phosphoserine). Phosphoserine; by ATM is present on Ser85. Glycyl lysine isopeptide (Lys-Gly) (interchain with G-Cter in ubiquitin) cross-links involve residues Lys111, Lys139, Lys143, Lys226, and Lys246. Residues 150–250 (LGELQESQSR…YDSHIKSSKG (101 aa)) form an interaction with TANK region. Residues 242-343 (DSHIKSSKGM…NKLKVGCHES (102 aa)) form a ubiquitin-binding (UBAN) region. The segment at 246-358 (KSSKGMQLED…MRKRHVETSQ (113 aa)) is self-association. A required for interaction with TNFAIP3 region spans residues 249–412 (KGMQLEDLRQ…LQIHVMECIE (164 aa)). Residue Lys270 forms a Glycyl lysine isopeptide (Lys-Gly) (interchain with G-Cter in SUMO); alternate linkage. A Glycyl lysine isopeptide (Lys-Gly) (interchain with G-Cter in ubiquitin); alternate cross-link involves residue Lys270. Glycyl lysine isopeptide (Lys-Gly) (interchain with G-Cter in ubiquitin) cross-links involve residues Lys276, Lys278, Lys285, and Lys295. A Glycyl lysine isopeptide (Lys-Gly) (interchain with G-Cter in SUMO); alternate cross-link involves residue Lys302. Lys302 participates in a covalent cross-link: Glycyl lysine isopeptide (Lys-Gly) (interchain with G-Cter in ubiquitin); alternate. Glycyl lysine isopeptide (Lys-Gly) (interchain with G-Cter in ubiquitin) cross-links involve residues Lys314 and Lys319. The leucine-zipper stretch occupies residues 315–336 (LVERKELLQEQLEQLQREFNKL). Ser369 carries the post-translational modification Phosphoserine; by IKKB. The segment at 375 to 412 (SNQRRSPPEEPPDFCCPKCQYQAPDMDTLQIHVMECIE) is interaction with CYLD. Ser380 is modified (phosphoserine). The segment at 382–412 (PEEPPDFCCPKCQYQAPDMDTLQIHVMECIE) adopts a CCHC NOA-type zinc-finger fold. A Zn(2+)-binding site is contributed by Cys390. A Glycyl lysine isopeptide (Lys-Gly) (interchain with G-Cter in ubiquitin) cross-link involves residue Lys392. Positions 393, 406, and 410 each coordinate Zn(2+).

In terms of assembly, homodimer; disulfide-linked. Component of the I-kappa-B-kinase (IKK) core complex consisting of CHUK, IKBKB and IKBKG; probably four alpha/CHUK-beta/IKBKB dimers are associated with four gamma/IKBKG subunits. The IKK core complex seems to associate with regulatory or adapter proteins to form a IKK-signalosome holo-complex. The IKK complex associates with TERF2IP/RAP1, leading to promote IKK-mediated phosphorylation of RELA/p65. Part of a complex composed of NCOA2, NCOA3, CHUK/IKKA, IKBKB, IKBKG and CREBBP. Interacts with COPS3, CYLD, NALP2, TRPC4AP and PIDD1. Interacts with ATM; the complex is exported from the nucleus. Interacts with TRAF6. Interacts with IKBKE. Interacts with TANK; the interaction is enhanced by IKBKE and TBK1. Part of a ternary complex consisting of TANK, IKBKB and IKBKG. Interacts with ZFAND5. Interacts with RIPK2. Interacts with TNIP1 and TNFAIP3; TNIP1 facilitates the TNFAIP3-mediated de-ubiquitination of IKBKG. Interacts with TNFAIP3; the interaction is induced by TNF stimulation and by polyubiquitin. Binds (via UBAN region) polyubiquitin; binds both 'Lys-63'-linked and linear polyubiquitin, with higher affinity for linear ubiquitin. Interacts with NLRP10. Interacts with TANK; this interaction increases in response to DNA damage. Interacts with USP10; this interaction increases in response to DNA damage. Interacts with ZC3H12A; this interaction increases in response to DNA damage. Interacts with IFIT5; the interaction synergizes the recruitment of IKK to MAP3K7 and enhances IKK phosphorylation. Interacts with TRIM29; this interaction induces IKBKG/NEMO ubiquitination and proteolytic degradation. Interacts with TRIM13; this interaction leads to IKBKG/NEMO ubiquitination. Interacts with ARFIP2. Interacts with RIPK1. Interacts with (ubiquitinated) BCL10; interaction with polyubiquitinated BCL10 via both 'Lys-63'-linked and linear ubiquitin is required for TCR-induced NF-kappa-B activation. Interacts with MARCHF2; during the late stages of macrophage viral and bacterial infection; the interaction leads to ubiquitination and degradation of IKBKG/NEMO. Phosphorylation at Ser-68 attenuates aminoterminal homodimerization. In terms of processing, polyubiquitinated on Lys-278 via 'Lys-63'-linked ubiquitin; the ubiquitination is mediated downstream of NOD2 and RIPK2 and probably plays a role in signaling by facilitating interactions with ubiquitin domain-containing proteins and activates the NF-kappa-B pathway. Polyubiquitinated on Lys-278 and Lys-302 through 'Lys-63'-linked ubiquitin; the ubiquitination is mediated by BCL10, MALT1 and TRAF6 and probably plays a role in signaling by facilitating interactions with ubiquitin domain-containing proteins and activates the NF-kappa-B pathway. Monoubiquitinated on Lys-270 and Lys-302; promotes nuclear export. Polyubiquitinated through 'Lys-27' by TRIM23; involved in antiviral innate and inflammatory responses. Linear polyubiquitinated on Lys-111, Lys-143, Lys-226, Lys-246, Lys-270, Lys-278, Lys-285, Lys-295, Lys-302 and Lys-319; the head-to-tail polyubiquitination is mediated by the LUBAC complex and plays a key role in NF-kappa-B activation. Deubiquitinated by USP10 in a TANK-dependent and -independent manner, leading to the negative regulation of NF-kappa-B signaling upon DNA damage. Ubiquitinated at Lys-319 by MARCHF2 following bacterial and viral infection which leads to its degradation. Polyubiquitinated via 'Lys-29'-linked ubiquitin; leading to lysosomal degradation. Post-translationally, sumoylated on Lys-270 and Lys-302 with SUMO1; the modification results in phosphorylation of Ser-85 by ATM leading to a replacement of the sumoylation by mono-ubiquitination on these residues. Neddylated by TRIM40, resulting in stabilization of NFKBIA and down-regulation of NF-kappa-B activity.

The protein localises to the cytoplasm. Its subcellular location is the nucleus. In terms of biological role, regulatory subunit of the IKK core complex which phosphorylates inhibitors of NF-kappa-B thus leading to the dissociation of the inhibitor/NF-kappa-B complex and ultimately the degradation of the inhibitor. Its binding to scaffolding polyubiquitin plays a key role in IKK activation by multiple signaling receptor pathways. Can recognize and bind both 'Lys-63'-linked and linear polyubiquitin upon cell stimulation, with a much highr affinity for linear polyubiquitin. Could be implicated in NF-kappa-B-mediated protection from cytokine toxicity. Essential for viral activation of IRF3. Involved in TLR3- and IFIH1-mediated antiviral innate response; this function requires 'Lys-27'-linked polyubiquitination. This is NF-kappa-B essential modulator (Ikbkg) from Rattus norvegicus (Rat).